The chain runs to 296 residues: Factor associated with metabolism and energy (296 aa).

The N-myristoyl glycine moiety is linked to residue Gly2. 2 stretches are compositionally biased toward basic and acidic residues: residues Ser173–Asp187 and Glu267–Thr281. Disordered regions lie at residues Ser173–Asp204 and Leu256–Thr281.

It localises to the cell membrane. The protein localises to the cytoplasmic vesicle. Its function is as follows. May be involved in tuning the metabolism, energy expenditure, and excretion processes. The protein is Factor associated with metabolism and energy of Homo sapiens (Human).